Here is a 139-residue protein sequence, read N- to C-terminus: Nucleoside diphosphate kinase (139 aa).

ATP is bound by residues lysine 10, phenylalanine 58, arginine 86, threonine 92, arginine 103, and asparagine 113. Histidine 116 serves as the catalytic Pros-phosphohistidine intermediate.

Belongs to the NDK family. Homotetramer. Mg(2+) serves as cofactor.

It localises to the cytoplasm. It carries out the reaction a 2'-deoxyribonucleoside 5'-diphosphate + ATP = a 2'-deoxyribonucleoside 5'-triphosphate + ADP. The catalysed reaction is a ribonucleoside 5'-diphosphate + ATP = a ribonucleoside 5'-triphosphate + ADP. In terms of biological role, major role in the synthesis of nucleoside triphosphates other than ATP. The ATP gamma phosphate is transferred to the NDP beta phosphate via a ping-pong mechanism, using a phosphorylated active-site intermediate. The sequence is that of Nucleoside diphosphate kinase from Phenylobacterium zucineum (strain HLK1).